Here is a 255-residue protein sequence, read N- to C-terminus: Tachylectin-2 (255 aa).

A signal peptide spans 1 to 19 (MKFLLVVLGFIGFLKDGIT). WD repeat units follow at residues 20 to 67 (VGGE…FLFL), 68 to 114 (SPGG…FLFF), 115 to 161 (DPNG…FLFF), 162 to 208 (HPNG…FLFF), and 209 to 255 (SSVG…FLFF).

In terms of assembly, monomer.

The protein resides in the secreted. It localises to the cytoplasmic granule. Lectin that binds specifically to N-acetylglucosamine and N-acetylgalactosamine. Is part of the innate immunity host defense system of the horseshoe crab. In Tachypleus tridentatus (Japanese horseshoe crab), this protein is Tachylectin-2.